The chain runs to 98 residues: NADH-ubiquinone oxidoreductase chain 4L (98 aa).

3 helical membrane-spanning segments follow: residues 2 to 22 (MMAVLNISLAFIFSLLGTLMF), 26 to 46 (LMSTLLCLEGMMLTLFIITTI), and 59 to 79 (IPIVILVFAACEAAVGLALLV).

It belongs to the complex I subunit 4L family. As to quaternary structure, core subunit of respiratory chain NADH dehydrogenase (Complex I) which is composed of 45 different subunits.

It is found in the mitochondrion inner membrane. It catalyses the reaction a ubiquinone + NADH + 5 H(+)(in) = a ubiquinol + NAD(+) + 4 H(+)(out). Its function is as follows. Core subunit of the mitochondrial membrane respiratory chain NADH dehydrogenase (Complex I) which catalyzes electron transfer from NADH through the respiratory chain, using ubiquinone as an electron acceptor. Part of the enzyme membrane arm which is embedded in the lipid bilayer and involved in proton translocation. The polypeptide is NADH-ubiquinone oxidoreductase chain 4L (MT-ND4L) (Phodopus sungorus (Striped hairy-footed hamster)).